We begin with the raw amino-acid sequence, 206 residues long: Ribonuclease HII (206 aa).

The 206-residue stretch at 1 to 206 folds into the RNase H type-2 domain; sequence MKVLGIDEAG…SWATVQKKKQ (206 aa). Positions 7, 8, and 105 each coordinate a divalent metal cation.

This sequence belongs to the RNase HII family. Mn(2+) is required as a cofactor. The cofactor is Mg(2+).

It localises to the cytoplasm. It carries out the reaction Endonucleolytic cleavage to 5'-phosphomonoester.. Endonuclease that specifically degrades the RNA of RNA-DNA hybrids. This Methanothermobacter thermautotrophicus (strain ATCC 29096 / DSM 1053 / JCM 10044 / NBRC 100330 / Delta H) (Methanobacterium thermoautotrophicum) protein is Ribonuclease HII (rnhB).